The sequence spans 247 residues: Probable transcriptional regulatory protein DVU_2259 (247 aa).

Residues 1–22 are disordered; it reads MAGHSKWANIQHRKGRQDAKRG.

This sequence belongs to the TACO1 family.

It is found in the cytoplasm. This is Probable transcriptional regulatory protein DVU_2259 from Nitratidesulfovibrio vulgaris (strain ATCC 29579 / DSM 644 / CCUG 34227 / NCIMB 8303 / VKM B-1760 / Hildenborough) (Desulfovibrio vulgaris).